We begin with the raw amino-acid sequence, 274 residues long: Methionine-binding lipoprotein MetQ (274 aa).

The N-terminal stretch at 1-19 is a signal peptide; that stretch reads MKKLFLGALLLVFAGVMAA. Residue Cys20 is the site of N-palmitoyl cysteine attachment. Cys20 carries S-diacylglycerol cysteine lipidation.

The protein belongs to the NlpA lipoprotein family. In terms of assembly, the complex is composed of two ATP-binding proteins (MetN), two transmembrane proteins (MetP) and a solute-binding protein (metQ).

It is found in the cell membrane. Functionally, part of the ABC transporter complex MetNPQ involved in methionine import. Binds the methionine and transfers it to the membrane-bound permease. It has also been shown to be involved in methionine sulfoxide transport. The sequence is that of Methionine-binding lipoprotein MetQ (metQ) from Bacillus subtilis (strain 168).